The following is a 349-amino-acid chain: Isopentenyl-diphosphate delta-isomerase (349 aa).

Arg5–Lys6 contacts substrate. FMN-binding positions include Ser62, Ala63–Thr65, Ser93, and Asn122. Position 93–95 (Ser93–Arg95) interacts with substrate. A substrate-binding site is contributed by Gln151. Residue Glu152 coordinates Mg(2+). FMN is bound by residues Lys183, Thr213, Gly259–Arg261, and Ala280–Leu281.

The protein belongs to the IPP isomerase type 2 family. Homooctamer. Dimer of tetramers. FMN serves as cofactor. NADPH is required as a cofactor. It depends on Mg(2+) as a cofactor.

The protein resides in the cytoplasm. It carries out the reaction isopentenyl diphosphate = dimethylallyl diphosphate. Involved in the biosynthesis of isoprenoids. Catalyzes the 1,3-allylic rearrangement of the homoallylic substrate isopentenyl (IPP) to its allylic isomer, dimethylallyl diphosphate (DMAPP). The sequence is that of Isopentenyl-diphosphate delta-isomerase from Methanothermobacter thermautotrophicus (strain ATCC 29096 / DSM 1053 / JCM 10044 / NBRC 100330 / Delta H) (Methanobacterium thermoautotrophicum).